A 183-amino-acid chain; its full sequence is Translation initiation factor IF-3 (183 aa).

This sequence belongs to the IF-3 family. As to quaternary structure, monomer.

Its subcellular location is the cytoplasm. Functionally, IF-3 binds to the 30S ribosomal subunit and shifts the equilibrium between 70S ribosomes and their 50S and 30S subunits in favor of the free subunits, thus enhancing the availability of 30S subunits on which protein synthesis initiation begins. This Pseudomonas syringae pv. tomato (strain ATCC BAA-871 / DC3000) protein is Translation initiation factor IF-3.